The sequence spans 165 residues: 2-C-methyl-D-erythritol 2,4-cyclodiphosphate synthase (165 aa).

Residues D12 and H14 each coordinate a divalent metal cation. Residues 12-14 and 38-39 contribute to the 4-CDP-2-C-methyl-D-erythritol 2-phosphate site; these read DIH and HS. Position 46 (H46) interacts with a divalent metal cation. 4-CDP-2-C-methyl-D-erythritol 2-phosphate-binding positions include 60-62, 136-139, and R146; these read DIG and TTNE.

Belongs to the IspF family. In terms of assembly, homotrimer. Requires a divalent metal cation as cofactor.

The enzyme catalyses 4-CDP-2-C-methyl-D-erythritol 2-phosphate = 2-C-methyl-D-erythritol 2,4-cyclic diphosphate + CMP. It participates in isoprenoid biosynthesis; isopentenyl diphosphate biosynthesis via DXP pathway; isopentenyl diphosphate from 1-deoxy-D-xylulose 5-phosphate: step 4/6. Involved in the biosynthesis of isopentenyl diphosphate (IPP) and dimethylallyl diphosphate (DMAPP), two major building blocks of isoprenoid compounds. Catalyzes the conversion of 4-diphosphocytidyl-2-C-methyl-D-erythritol 2-phosphate (CDP-ME2P) to 2-C-methyl-D-erythritol 2,4-cyclodiphosphate (ME-CPP) with a corresponding release of cytidine 5-monophosphate (CMP). This Nostoc sp. (strain PCC 7120 / SAG 25.82 / UTEX 2576) protein is 2-C-methyl-D-erythritol 2,4-cyclodiphosphate synthase.